Here is a 506-residue protein sequence, read N- to C-terminus: Cobyric acid synthase (506 aa).

The 200-residue stretch at 254 to 453 folds into the GATase cobBQ-type domain; the sequence is DLDIAVIRLP…IHGIFESDSF (200 aa). The active-site Nucleophile is C334. H445 is a catalytic residue.

It belongs to the CobB/CobQ family. CobQ subfamily.

It functions in the pathway cofactor biosynthesis; adenosylcobalamin biosynthesis. Its function is as follows. Catalyzes amidations at positions B, D, E, and G on adenosylcobyrinic A,C-diamide. NH(2) groups are provided by glutamine, and one molecule of ATP is hydrogenolyzed for each amidation. The chain is Cobyric acid synthase from Dehalococcoides mccartyi (strain ATCC BAA-2266 / KCTC 15142 / 195) (Dehalococcoides ethenogenes (strain 195)).